The sequence spans 364 residues: Chorismate synthase (364 aa).

Residues Arg48 and Arg54 each contribute to the NADP(+) site. FMN contacts are provided by residues Arg125–Ser127, Asn238–Ala239, Gly278, Lys293–Ser297, and Arg319.

Belongs to the chorismate synthase family. As to quaternary structure, homotetramer. Requires FMNH2 as cofactor.

It carries out the reaction 5-O-(1-carboxyvinyl)-3-phosphoshikimate = chorismate + phosphate. It functions in the pathway metabolic intermediate biosynthesis; chorismate biosynthesis; chorismate from D-erythrose 4-phosphate and phosphoenolpyruvate: step 7/7. Functionally, catalyzes the anti-1,4-elimination of the C-3 phosphate and the C-6 proR hydrogen from 5-enolpyruvylshikimate-3-phosphate (EPSP) to yield chorismate, which is the branch point compound that serves as the starting substrate for the three terminal pathways of aromatic amino acid biosynthesis. This reaction introduces a second double bond into the aromatic ring system. This is Chorismate synthase from Shewanella sediminis (strain HAW-EB3).